Consider the following 227-residue polypeptide: Protein GET1 (227 aa).

Topologically, residues Met-1–Leu-3 are lumenal. Residues Leu-4–Asn-23 form a helical membrane-spanning segment. Residues Val-24–Ile-107 are Cytoplasmic-facing. Positions Ala-72 to Lys-96 form a coiled coil. Residues Trp-108–Phe-128 form a helical membrane-spanning segment. The Lumenal segment spans residues Tyr-129–Ser-151. A helical membrane pass occupies residues Val-152–Leu-168. Residues Glu-169–Ser-227 lie on the Cytoplasmic side of the membrane. Positions Glu-184–Ser-227 are disordered. Positions Ser-190–Ser-211 are enriched in low complexity.

The protein belongs to the WRB/GET1 family. Interacts with GET3.

The protein localises to the endoplasmic reticulum membrane. In terms of biological role, required for the post-translational delivery of tail-anchored (TA) proteins to the endoplasmic reticulum. Acts as a membrane receptor for soluble GET3, which recognizes and selectively binds the transmembrane domain of TA proteins in the cytosol. The chain is Protein GET1 from Coprinopsis cinerea (strain Okayama-7 / 130 / ATCC MYA-4618 / FGSC 9003) (Inky cap fungus).